We begin with the raw amino-acid sequence, 259 residues long: Polycomb group RING finger protein 1 (259 aa).

The residue at position 2 (Ala-2) is an N-acetylalanine. At Ser-3 the chain carries Phosphoserine. A Glycyl lysine isopeptide (Lys-Gly) (interchain with G-Cter in SUMO2) cross-link involves residue Lys-24. The segment at 47-86 adopts an RING-type zinc-finger fold; it reads CCLCAGYFVDATTITECLHTFCKSCIVKYLQTSKYCPMCN. The required for repressor activity stretch occupies residues 86 to 247; sequence NIKIHETQPL…LSRWFGKPSP (162 aa). A Glycyl lysine isopeptide (Lys-Gly) (interchain with G-Cter in SUMO2) cross-link involves residue Lys-88. Residues 150–255 form a required for the interaction with the KDM2B-SKP1 heterodimeric complex region; the sequence is LPFSSFDHSK…SPLLLQYSVK (106 aa). Residues 167 to 255 are RING-finger and WD40-associated ubiquitin-like domain (RAWUL); sufficient for interaction with BCOR and BCORL1; the sequence is EQLNLCLERL…SPLLLQYSVK (89 aa).

In terms of assembly, interacts with BCORL1, forming heterodimers. The PCGF1-BCORL1 heterodimeric complex interacts with the KDM2B-SKP1 heterodimeric complex to form a homotetrameric polycomb repression complex 1 (PRC1.1). Component of the repressive BCOR complex containing a Polycomb group subcomplex at least composed of RYBP, RING1 and RNF2/RING2. Specifically interacts with BCOR, RING1 and RNF2/RING2. Component of a PRC1-like complex. Interacts with CBX6, CBX7 and CBX8. Interacts with DPPA4, NANOG, POU5F1 and RYBP. As to expression, ubiquitous.

Its subcellular location is the nucleus. Its function is as follows. Component of the Polycomb group (PcG) multiprotein BCOR complex, a complex required to maintain the transcriptionally repressive state of some genes, such as BCL6 and the cyclin-dependent kinase inhibitor, CDKN1A. Transcriptional repressor that may be targeted to the DNA by BCL6; this transcription repressor activity may be related to PKC signaling pathway. Represses CDKN1A expression by binding to its promoter, and this repression is dependent on the retinoic acid response element (RARE element). Promotes cell cycle progression and enhances cell proliferation as well. May have a positive role in tumor cell growth by down-regulating CDKN1A. Component of a Polycomb group (PcG) multiprotein PRC1-like complex, a complex class required to maintain the transcriptionally repressive state of many genes, including Hox genes, throughout development. PcG PRC1 complex acts via chromatin remodeling and modification of histones; it mediates monoubiquitination of histone H2A 'Lys-119', rendering chromatin heritably changed in its expressibility. Within the PRC1-like complex, regulates RNF2 ubiquitin ligase activity. Regulates the expression of DPPA4 and NANOG in the NT2 embryonic carcinoma cells. This Homo sapiens (Human) protein is Polycomb group RING finger protein 1 (PCGF1).